The following is a 249-amino-acid chain: Fatty acid elongase 5 (249 aa).

The next 3 membrane-spanning stretches (helical) occupy residues 23 to 43 (VFVN…VIVL), 68 to 88 (VALS…GVFN), and 100 to 120 (WIFV…FIVL). Residues 131 to 135 (HIYHH) carry the HxxHH motif motif. His134 functions as the Nucleophile in the catalytic mechanism. A run of 4 helical transmembrane segments spans residues 138–158 (IGFI…AFFG), 159–179 (AWIN…TSLG), 193–213 (MIQF…HSPI), and 217–236 (WAVL…MRFY).

The protein belongs to the ELO family.

It localises to the membrane. The catalysed reaction is an acyl-CoA + malonyl-CoA + H(+) = a 3-oxoacyl-CoA + CO2 + CoA. Its pathway is lipid metabolism; polyunsaturated fatty acid biosynthesis. Functionally, involved in the synthesis of fatty acids. Elongates C20 polyunsaturated fatty acids (PUFAs) with a preference for n-6 PUFAs. This is Fatty acid elongase 5 from Leishmania major.